A 208-amino-acid polypeptide reads, in one-letter code: V-type proton ATPase subunit E (208 aa).

Belongs to the V-ATPase E subunit family.

Its function is as follows. Produces ATP from ADP in the presence of a proton gradient across the membrane. This chain is V-type proton ATPase subunit E, found in Chlamydia trachomatis serovar L2 (strain ATCC VR-902B / DSM 19102 / 434/Bu).